The chain runs to 788 residues: Protein kintoun (788 aa).

3 disordered regions span residues 194 to 249 (LRKP…SEQD), 415 to 438 (NNSE…EISP), and 628 to 754 (HKEH…SSSV). Over residues 225–241 (GKEKKDQKRVIKEEHKQ) the composition is skewed to basic and acidic residues. Positions 417-427 (SEGLTSESNLD) are enriched in polar residues. Basic and acidic residues-rich tracts occupy residues 628 to 644 (HKEH…DVGV) and 667 to 682 (ENTE…RYEE). Composition is skewed to polar residues over residues 685-701 (STSC…QKDS) and 744-754 (NFDSRPASSSV).

It belongs to the PIH1 family. Kintoun subfamily.

The protein resides in the cytoplasm. The protein localises to the dynein axonemal particle. In terms of biological role, required for cytoplasmic pre-assembly of axonemal dyneins, thereby playing a central role in motility in cilia and flagella. Involved in pre-assembly of dynein arm complexes in the cytoplasm before intraflagellar transport loads them for the ciliary compartment. This chain is Protein kintoun, found in Xenopus laevis (African clawed frog).